Here is a 405-residue protein sequence, read N- to C-terminus: Argininosuccinate synthase (405 aa).

ATP is bound by residues 10 to 18 (AYSGGLDTS) and A37. Positions 88 and 93 each coordinate L-citrulline. G118 serves as a coordination point for ATP. 3 residues coordinate L-aspartate: T120, N124, and D125. N124 contacts L-citrulline. L-citrulline contacts are provided by R128, S179, S188, E264, and Y276.

This sequence belongs to the argininosuccinate synthase family. Type 1 subfamily. Homotetramer.

It is found in the cytoplasm. The catalysed reaction is L-citrulline + L-aspartate + ATP = 2-(N(omega)-L-arginino)succinate + AMP + diphosphate + H(+). It participates in amino-acid biosynthesis; L-arginine biosynthesis; L-arginine from L-ornithine and carbamoyl phosphate: step 2/3. This is Argininosuccinate synthase from Pseudomonas fluorescens (strain Pf0-1).